Consider the following 338-residue polypeptide: Glycerol-3-phosphate dehydrogenase [NAD(P)+] (338 aa).

The NADPH site is built by tryptophan 20 and lysine 110. 3 residues coordinate sn-glycerol 3-phosphate: lysine 110, glycine 141, and serine 143. Alanine 145 serves as a coordination point for NADPH. Residues lysine 197, aspartate 250, serine 260, arginine 261, and asparagine 262 each contribute to the sn-glycerol 3-phosphate site. Catalysis depends on lysine 197, which acts as the Proton acceptor. Arginine 261 lines the NADPH pocket. Position 287 (glutamate 287) interacts with NADPH.

It belongs to the NAD-dependent glycerol-3-phosphate dehydrogenase family.

The protein localises to the cytoplasm. It catalyses the reaction sn-glycerol 3-phosphate + NAD(+) = dihydroxyacetone phosphate + NADH + H(+). It carries out the reaction sn-glycerol 3-phosphate + NADP(+) = dihydroxyacetone phosphate + NADPH + H(+). It participates in membrane lipid metabolism; glycerophospholipid metabolism. Catalyzes the reduction of the glycolytic intermediate dihydroxyacetone phosphate (DHAP) to sn-glycerol 3-phosphate (G3P), the key precursor for phospholipid synthesis. This is Glycerol-3-phosphate dehydrogenase [NAD(P)+] from Aster yellows witches'-broom phytoplasma (strain AYWB).